The chain runs to 310 residues: Olfactory receptor 5P56 (310 aa).

Topologically, residues 1–25 (MEAQNHTTVKEFILLGLTENSTLRV) are extracellular. Asparagine 5 and asparagine 20 each carry an N-linked (GlcNAc...) asparagine glycan. The helical transmembrane segment at 26-46 (ILFMIFLGIYTVTLVGNFSII) threads the bilayer. Topologically, residues 47–54 (SLIRSCPQ) are cytoplasmic. The helical transmembrane segment at 55–75 (LHTPMYLFLSHLALVDIGFST) threads the bilayer. Residues 76–99 (SITPIMLTGFLGHTVTLSVAACVA) lie on the Extracellular side of the membrane. Cysteines 97 and 189 form a disulfide. The helical transmembrane segment at 100–120 (QFCIAVTFGTVECFLLAVMAY) threads the bilayer. Residues 121-133 (DRYVAICSPLLYS) lie on the Cytoplasmic side of the membrane. A helical membrane pass occupies residues 134-154 (THMSPRICFLLVGASYVGGCV). Topologically, residues 155 to 196 (NSGTFTSCLLILSFCGPNQIDHFFCDFPAVLKLSCSDVSIIG) are extracellular. The helical transmembrane segment at 197–217 (IIPSISAGSIIVITVFVIAVS) threads the bilayer. Over 218-237 (YTYILITILNMRSTEGRHKA) the chain is Cytoplasmic. A helical membrane pass occupies residues 238 to 258 (FSTCTSHLTAVTLYYGTITFI). The Extracellular portion of the chain corresponds to 259 to 271 (YVMPKSNYSTAQN). Asparagine 265 is a glycosylation site (N-linked (GlcNAc...) asparagine). Residues 272-292 (KILSVFYTVVIPMLNPLIYSL) traverse the membrane as a helical segment. The Cytoplasmic portion of the chain corresponds to 293–310 (RNRDVKEALRKAIIRIFP).

The protein belongs to the G-protein coupled receptor 1 family.

It localises to the cell membrane. In terms of biological role, potential odorant receptor. In Mus musculus (Mouse), this protein is Olfactory receptor 5P56.